Reading from the N-terminus, the 564-residue chain is Cysteine--tRNA ligase CPS1, chloroplastic/mitochondrial (564 aa).

A chloroplast and mitochondrion-targeting transit peptide spans 1-43 (MAAAVVVRRAAGLIPLLSSRFGARMPLHRALSQIPPPRFCRLL). Residue cysteine 93 coordinates Zn(2+). Residues 95-105 (VTPYDDSHIGH) carry the 'HIGH' region motif. Residues cysteine 273, histidine 298, and glutamate 302 each contribute to the Zn(2+) site. Residues 330 to 334 (KMSKS) carry the 'KMSKS' region motif. Residue lysine 333 participates in ATP binding.

It belongs to the class-I aminoacyl-tRNA synthetase family. The cofactor is Zn(2+).

The protein resides in the plastid. It localises to the chloroplast. The protein localises to the mitochondrion. It carries out the reaction tRNA(Cys) + L-cysteine + ATP = L-cysteinyl-tRNA(Cys) + AMP + diphosphate. Functionally, nuclear genome-encoded factor required for normal assembly of chloroplast polysomes. In Zea mays (Maize), this protein is Cysteine--tRNA ligase CPS1, chloroplastic/mitochondrial.